The following is a 338-amino-acid chain: Glycerol-3-phosphate dehydrogenase [NAD(P)+] (338 aa).

NADPH contacts are provided by Ser14, Tyr15, His35, and Lys109. Positions 109, 138, and 140 each coordinate sn-glycerol 3-phosphate. Ala142 is an NADPH binding site. Sn-glycerol 3-phosphate-binding residues include Lys194, Asp247, Ser257, Arg258, and Asn259. Lys194 (proton acceptor) is an active-site residue. Arg258 serves as a coordination point for NADPH. The NADPH site is built by Val282 and Glu284.

It belongs to the NAD-dependent glycerol-3-phosphate dehydrogenase family.

It localises to the cytoplasm. It carries out the reaction sn-glycerol 3-phosphate + NAD(+) = dihydroxyacetone phosphate + NADH + H(+). The catalysed reaction is sn-glycerol 3-phosphate + NADP(+) = dihydroxyacetone phosphate + NADPH + H(+). The protein operates within membrane lipid metabolism; glycerophospholipid metabolism. Its function is as follows. Catalyzes the reduction of the glycolytic intermediate dihydroxyacetone phosphate (DHAP) to sn-glycerol 3-phosphate (G3P), the key precursor for phospholipid synthesis. This chain is Glycerol-3-phosphate dehydrogenase [NAD(P)+], found in Shewanella sp. (strain MR-4).